Here is a 495-residue protein sequence, read N- to C-terminus: 3-octaprenyl-4-hydroxybenzoate carboxy-lyase (495 aa).

Residue N172 participates in Mn(2+) binding. Prenylated FMN contacts are provided by residues 175-177 (IYR), 189-191 (RWL), and 194-195 (RG). Mn(2+) is bound at residue E238. Residue D287 is the Proton donor of the active site.

This sequence belongs to the UbiD family. Homohexamer. It depends on prenylated FMN as a cofactor. Mn(2+) serves as cofactor.

Its subcellular location is the cell membrane. It carries out the reaction a 4-hydroxy-3-(all-trans-polyprenyl)benzoate + H(+) = a 2-(all-trans-polyprenyl)phenol + CO2. It functions in the pathway cofactor biosynthesis; ubiquinone biosynthesis. Functionally, catalyzes the decarboxylation of 3-octaprenyl-4-hydroxy benzoate to 2-octaprenylphenol, an intermediate step in ubiquinone biosynthesis. The sequence is that of 3-octaprenyl-4-hydroxybenzoate carboxy-lyase from Yersinia pseudotuberculosis serotype O:1b (strain IP 31758).